The chain runs to 576 residues: Proline--tRNA ligase (576 aa).

The protein belongs to the class-II aminoacyl-tRNA synthetase family. ProS type 1 subfamily. Homodimer.

The protein localises to the cytoplasm. The catalysed reaction is tRNA(Pro) + L-proline + ATP = L-prolyl-tRNA(Pro) + AMP + diphosphate. Catalyzes the attachment of proline to tRNA(Pro) in a two-step reaction: proline is first activated by ATP to form Pro-AMP and then transferred to the acceptor end of tRNA(Pro). As ProRS can inadvertently accommodate and process non-cognate amino acids such as alanine and cysteine, to avoid such errors it has two additional distinct editing activities against alanine. One activity is designated as 'pretransfer' editing and involves the tRNA(Pro)-independent hydrolysis of activated Ala-AMP. The other activity is designated 'posttransfer' editing and involves deacylation of mischarged Ala-tRNA(Pro). The misacylated Cys-tRNA(Pro) is not edited by ProRS. The chain is Proline--tRNA ligase from Trichlorobacter lovleyi (strain ATCC BAA-1151 / DSM 17278 / SZ) (Geobacter lovleyi).